The primary structure comprises 377 residues: N5-carboxyaminoimidazole ribonucleotide synthase (377 aa).

ATP is bound by residues Arg93, Lys133, 138-144 (GYDGKGQ), 175-178 (EEFV), Glu183, His206, and 257-258 (NE). Residues 97–287 (KALLDHAGVR…QFENHLRAVC (191 aa)) enclose the ATP-grasp domain.

Belongs to the PurK/PurT family. As to quaternary structure, homodimer.

It catalyses the reaction 5-amino-1-(5-phospho-beta-D-ribosyl)imidazole + hydrogencarbonate + ATP = 5-carboxyamino-1-(5-phospho-D-ribosyl)imidazole + ADP + phosphate + 2 H(+). It functions in the pathway purine metabolism; IMP biosynthesis via de novo pathway; 5-amino-1-(5-phospho-D-ribosyl)imidazole-4-carboxylate from 5-amino-1-(5-phospho-D-ribosyl)imidazole (N5-CAIR route): step 1/2. In terms of biological role, catalyzes the ATP-dependent conversion of 5-aminoimidazole ribonucleotide (AIR) and HCO(3)(-) to N5-carboxyaminoimidazole ribonucleotide (N5-CAIR). The sequence is that of N5-carboxyaminoimidazole ribonucleotide synthase from Vibrio vulnificus (strain CMCP6).